A 136-amino-acid chain; its full sequence is Sec-independent protein translocase protein TatB (136 aa).

Residues 1–21 form a helical membrane-spanning segment; sequence MFDIGFPELALVAVIGLLVLG. Residues 89–136 are disordered; that stretch reads YEDMVEKNPATPMSSKASTPQTPSSGPDPQPVESHSHSDDASKQHDRS. The segment covering 99 to 115 has biased composition (polar residues); the sequence is TPMSSKASTPQTPSSGP. Basic and acidic residues predominate over residues 122–136; it reads SHSHSDDASKQHDRS.

It belongs to the TatB family. The Tat system comprises two distinct complexes: a TatABC complex, containing multiple copies of TatA, TatB and TatC subunits, and a separate TatA complex, containing only TatA subunits. Substrates initially bind to the TatABC complex, which probably triggers association of the separate TatA complex to form the active translocon.

The protein localises to the cell inner membrane. Its function is as follows. Part of the twin-arginine translocation (Tat) system that transports large folded proteins containing a characteristic twin-arginine motif in their signal peptide across membranes. Together with TatC, TatB is part of a receptor directly interacting with Tat signal peptides. TatB may form an oligomeric binding site that transiently accommodates folded Tat precursor proteins before their translocation. In Hahella chejuensis (strain KCTC 2396), this protein is Sec-independent protein translocase protein TatB.